The primary structure comprises 117 residues: UPF0102 protein Spro_4337 (117 aa).

This sequence belongs to the UPF0102 family.

In Serratia proteamaculans (strain 568), this protein is UPF0102 protein Spro_4337.